Here is a 509-residue protein sequence, read N- to C-terminus: Light-independent protochlorophyllide reductase subunit B (509 aa).

Position 36 (Asp36) interacts with [4Fe-4S] cluster. Catalysis depends on Asp295, which acts as the Proton donor. 430 to 431 is a substrate binding site; it reads GM.

Belongs to the ChlB/BchB/BchZ family. Protochlorophyllide reductase is composed of three subunits; ChlL, ChlN and ChlB. Forms a heterotetramer of two ChlB and two ChlN subunits. The cofactor is [4Fe-4S] cluster.

The protein resides in the plastid. It is found in the chloroplast. It carries out the reaction chlorophyllide a + oxidized 2[4Fe-4S]-[ferredoxin] + 2 ADP + 2 phosphate = protochlorophyllide a + reduced 2[4Fe-4S]-[ferredoxin] + 2 ATP + 2 H2O. It functions in the pathway porphyrin-containing compound metabolism; chlorophyll biosynthesis (light-independent). Functionally, component of the dark-operative protochlorophyllide reductase (DPOR) that uses Mg-ATP and reduced ferredoxin to reduce ring D of protochlorophyllide (Pchlide) to form chlorophyllide a (Chlide). This reaction is light-independent. The NB-protein (ChlN-ChlB) is the catalytic component of the complex. This Mesostigma viride (Green alga) protein is Light-independent protochlorophyllide reductase subunit B.